Consider the following 443-residue polypeptide: RILP-like protein homolog (443 aa).

Residues Glu-8–Phe-96 enclose the RH1 domain. Residues Leu-59 to Lys-315 adopt a coiled-coil conformation. In terms of domain architecture, RH2 spans Arg-282 to Phe-401. Residues Leu-311–Ser-394 form a disordered region. Over residues Asp-332 to Ala-355 the composition is skewed to acidic residues. The span at Ala-356–Glu-368 shows a compositional bias: low complexity.

Belongs to the RILPL family. In terms of assembly, interacts with Arl8 (in GTP-bound form).

It localises to the lysosome membrane. Functionally, may have a role in lysosome distribution by interacting with Arl8. The protein is RILP-like protein homolog of Drosophila melanogaster (Fruit fly).